We begin with the raw amino-acid sequence, 337 residues long: Protein XAP5 CIRCADIAN TIMEKEEPER (337 aa).

At S2 the chain carries N-acetylserine. Coiled-coil stretches lie at residues 13–41 (QDAV…KSAS) and 72–121 (TREE…GSSR). Basic and acidic residues predominate over residues 23–37 (KQREAERKKIQELKS). Positions 23–47 (KQREAERKKIQELKSKSASGNDQSG) are disordered. The span at 38-47 (KSASGNDQSG) shows a compositional bias: polar residues. The interval 125 to 174 (AEDFENGSDEDDGENKSSGTGNLRCGKLGKDPSVETNFLPDSEREAEEQA) is disordered. Positions 126-137 (EDFENGSDEDDG) are enriched in acidic residues. Position 132 is a phosphoserine (S132). Positions 165–174 (DSEREAEEQA) are enriched in basic and acidic residues.

The protein belongs to the FAM50 family. As to expression, expressed in leaves stems, flowers, roots, trichomes and hypocotyls.

It localises to the nucleus. In terms of biological role, involved in light regulation of the circadian clock and photomorphogenesis. May play a global role in coordinating growth in response to the light environment. Acts as a light quality sensor directing both negative and positive transcriptional regulation. Inhibits growth in red light but promote growth in blue light. Inhibits clock gene expression in diurnal cycles. Plays no role in the control of flowering time. This is Protein XAP5 CIRCADIAN TIMEKEEPER (XCT) from Arabidopsis thaliana (Mouse-ear cress).